Consider the following 275-residue polypeptide: Stage 0 sporulation protein YaaT (275 aa).

The 86-residue stretch at 61–146 folds into the PSP1 C-terminal domain; the sequence is RKVIRVADDR…FKTRIELRQI (86 aa).

It localises to the cytoplasm. In terms of biological role, essential for the phosphorelay during initiation of sporulation. May control the level of phosphorylated spo0A through spo0E activity during sporulation. The sequence is that of Stage 0 sporulation protein YaaT (yaaT) from Bacillus subtilis (strain 168).